Reading from the N-terminus, the 104-residue chain is Small ribosomal subunit protein uS10 (104 aa).

Belongs to the universal ribosomal protein uS10 family. As to quaternary structure, part of the 30S ribosomal subunit.

Functionally, involved in the binding of tRNA to the ribosomes. The protein is Small ribosomal subunit protein uS10 of Ruegeria pomeroyi (strain ATCC 700808 / DSM 15171 / DSS-3) (Silicibacter pomeroyi).